The sequence spans 347 residues: MLGSIPVLVNRSGSDSNKFQATDQKWSYTDLQSDQTKLNLSAYGEVNGLLNPALVETYFGTTRTSSTANQNSTTVPGIGFKIPEQNNDSKATLITPGLAWTPQDVGNLVVSGTTVSFQLGGWLVTFTDFVKPRAGYLGLQLSGLNASDSDQRELIWAPRPWAAFRGSWVNRLGRVESVWDLKGVWADQAQLAAQAATSSTTTTATGATLPEHPNALAYQISYTDKDSYKASTQGSGQTNSQNNSLYLHLIKPKKVESTTQLDQGLKNLLDPNQVRTKLRQSFGTDHSTQPQPQSLKTTTPVFGAMSGNLGSVLSGGGAGGAGSTNSVDLSPVERVSGSLTINRNFSY.

Over residues 282–300 the composition is skewed to polar residues; it reads FGTDHSTQPQPQSLKTTTP. The disordered stretch occupies residues 282 to 302; the sequence is FGTDHSTQPQPQSLKTTTPVF.

Belongs to the adhesin P1 family.

In Mycoplasma pneumoniae (strain ATCC 29342 / M129 / Subtype 1) (Mycoplasmoides pneumoniae), this protein is Putative adhesin P1-like protein MPN_099.